Consider the following 167-residue polypeptide: Interferon gamma (167 aa).

The first 23 residues, Met1 to Cys23, serve as a signal peptide directing secretion. Pyrrolidone carboxylic acid is present on Gln24. N-linked (GlcNAc...) asparagine glycosylation is found at Asn41, Asn108, and Asn117.

This sequence belongs to the type II (or gamma) interferon family. As to quaternary structure, homodimer. Interacts with IFNGR1 (via extracellular domain); this interaction promotes IFNGR1 dimerization. As to expression, released primarily from activated T lymphocytes.

It localises to the secreted. Type II interferon produced by immune cells such as T-cells and NK cells that plays crucial roles in antimicrobial, antiviral, and antitumor responses by activating effector immune cells and enhancing antigen presentation. Primarily signals through the JAK-STAT pathway after interaction with its receptor IFNGR1 to affect gene regulation. Upon IFNG binding, IFNGR1 intracellular domain opens out to allow association of downstream signaling components JAK2, JAK1 and STAT1, leading to STAT1 activation, nuclear translocation and transcription of IFNG-regulated genes. Many of the induced genes are transcription factors such as IRF1 that are able to further drive regulation of a next wave of transcription. Plays a role in class I antigen presentation pathway by inducing a replacement of catalytic proteasome subunits with immunoproteasome subunits. In turn, increases the quantity, quality, and repertoire of peptides for class I MHC loading. Increases the efficiency of peptide generation also by inducing the expression of activator PA28 that associates with the proteasome and alters its proteolytic cleavage preference. Up-regulates as well MHC II complexes on the cell surface by promoting expression of several key molecules such as cathepsins B/CTSB, H/CTSH, and L/CTSL. Participates in the regulation of hematopoietic stem cells during development and under homeostatic conditions by affecting their development, quiescence, and differentiation. This chain is Interferon gamma (IFNG), found in Oryctolagus cuniculus (Rabbit).